The chain runs to 147 residues: Austinoid biosynthesis clusters protein H (147 aa).

This sequence belongs to the trt14 isomerase family. As to quaternary structure, homodimer.

The protein operates within secondary metabolite biosynthesis; terpenoid biosynthesis. Functionally, part of the gene cluster B that mediates the biosynthesis of the fungal meroterpenoid acetoxydehydroaustin. The first step of the pathway is the synthesis of 3,5-dimethylorsellinic acid by the polyketide synthase ausA. 3,5-dimethylorsellinic acid is then prenylated by the polyprenyl transferase ausN. Further epoxidation by the FAD-dependent monooxygenase ausM and cyclization by the probable terpene cyclase ausL lead to the formation of protoaustinoid A. Protoaustinoid A is then oxidized to spiro-lactone preaustinoid A3 by the combined action of the FAD-binding monooxygenases ausB and ausC, and the dioxygenase ausE. Acid-catalyzed keto-rearrangement and ring contraction of the tetraketide portion of preaustinoid A3 by ausJ lead to the formation of preaustinoid A4. The aldo-keto reductase ausK, with the help of ausH, is involved in the next step by transforming preaustinoid A4 into isoaustinone which is in turn hydroxylated by the P450 monooxygenase ausI to form austinolide. The cytochrome P450 monooxygenase ausG then modifies austinolide to austinol. Austinol is further acetylated to austin by the O-acetyltransferase ausP, which spontaneously changes to dehydroaustin. The cytochrome P450 monooxygenase then converts dehydroaustin is into 7-dehydrodehydroaustin. The hydroxylation catalyzed by ausR permits the second O-acetyltransferase ausQ to add an additional acetyl group to the molecule, leading to the formation of acetoxydehydroaustin. Due to genetic rearrangements of the clusters and the subsequent loss of some enzymes, the end product of the Penicillium brasilianum austinoid biosynthesis clusters is acetoxydehydroaustin. The polypeptide is Austinoid biosynthesis clusters protein H (Penicillium brasilianum).